Here is a 1337-residue protein sequence, read N- to C-terminus: GTPase activating protein homolog 3 (1337 aa).

An F-BAR domain is found at 14–264; it reads PESFADLWDG…LINSINNEDE (251 aa). Disordered regions lie at residues 279–328 and 345–392; these read PKPF…LPIF and ITNS…RFST. Over residues 293–302 the composition is skewed to pro residues; sequence TPPPPPPPQI. Positions 345-358 are enriched in polar residues; it reads ITNSLSLSSDSLQT. One can recognise a Rho-GAP domain in the interval 422-611; it reads CKIEDIMVAQ…NIIEHFKPLQ (190 aa). Disordered stretches follow at residues 612 to 689, 733 to 781, and 794 to 821; these read VNDS…TTNT, VNNN…HTVA, and ITTPQKSIGDGNGLIGQSPSAHLMSPSE. Composition is skewed to low complexity over residues 621 to 637, 645 to 687, and 734 to 772; these read SSSSSSSTSINQSSIES, SSTN…SSTT, and NNNNQNQNQNQNQNQNQDQNQNQSKQPIQSSNQTQQQVS. Residues 830-859 adopt a coiled-coil conformation; it reads YLEDQERCKQRIDELHTQVNELYSDITTIE. 2 disordered regions span residues 1041-1102 and 1114-1166; these read SDPD…INNS and KSAL…AHAI. Residues 1047–1063 show a composition bias toward polar residues; sequence SPPTISNTTNRLLNTSG. Composition is skewed to low complexity over residues 1064–1102 and 1114–1159; these read STDFSTTPLSSSPSTSSTSLSTNNNNNNNGNRNLDINNS and KSAL…TTTN. Residues 1189-1219 are a coiled coil; that stretch reads LEINNKLHSQLTEELKKKQQQYKQLIFDIID.

The protein resides in the cytoplasm. Its subcellular location is the contractile vacuole. Its function is as follows. Rho GTPase-activating protein involved in the signal transduction pathway. The polypeptide is GTPase activating protein homolog 3 (mgp3) (Dictyostelium discoideum (Social amoeba)).